A 240-amino-acid polypeptide reads, in one-letter code: Large ribosomal subunit protein uL2 (240 aa).

The segment covering 1 to 20 has biased composition (polar residues); sequence MGKRLQSQNRGKGTPRYTSP. 2 disordered regions span residues 1 to 33 and 204 to 240; these read MGKR…YRKF and PFGG…TGKR. 2 stretches are compositionally biased toward basic residues: residues 21–30 and 224–240; these read THKRKGAVKY and SPGR…TGKR.

The protein belongs to the universal ribosomal protein uL2 family. Part of the 50S ribosomal subunit. Forms a bridge to the 30S subunit in the 70S ribosome.

In terms of biological role, one of the primary rRNA binding proteins. Required for association of the 30S and 50S subunits to form the 70S ribosome, for tRNA binding and peptide bond formation. It has been suggested to have peptidyltransferase activity; this is somewhat controversial. Makes several contacts with the 16S rRNA in the 70S ribosome. This Methanococcus aeolicus (strain ATCC BAA-1280 / DSM 17508 / OCM 812 / Nankai-3) protein is Large ribosomal subunit protein uL2.